The primary structure comprises 417 residues: Multifunctional CCA protein (417 aa).

Residues Gly-8 and Arg-11 each coordinate ATP. Gly-8 and Arg-11 together coordinate CTP. Mg(2+)-binding residues include Asp-21 and Asp-23. The ATP site is built by Arg-91, Arg-137, and Arg-140. Positions 91, 137, and 140 each coordinate CTP. The 102-residue stretch at 225–326 (SGIHTLMTLQ…LNVLKKTDAF (102 aa)) folds into the HD domain.

This sequence belongs to the tRNA nucleotidyltransferase/poly(A) polymerase family. Bacterial CCA-adding enzyme type 1 subfamily. In terms of assembly, monomer. Can also form homodimers and oligomers. The cofactor is Mg(2+). Ni(2+) serves as cofactor.

The catalysed reaction is a tRNA precursor + 2 CTP + ATP = a tRNA with a 3' CCA end + 3 diphosphate. The enzyme catalyses a tRNA with a 3' CCA end + 2 CTP + ATP = a tRNA with a 3' CCACCA end + 3 diphosphate. In terms of biological role, catalyzes the addition and repair of the essential 3'-terminal CCA sequence in tRNAs without using a nucleic acid template. Adds these three nucleotides in the order of C, C, and A to the tRNA nucleotide-73, using CTP and ATP as substrates and producing inorganic pyrophosphate. tRNA 3'-terminal CCA addition is required both for tRNA processing and repair. Also involved in tRNA surveillance by mediating tandem CCA addition to generate a CCACCA at the 3' terminus of unstable tRNAs. While stable tRNAs receive only 3'-terminal CCA, unstable tRNAs are marked with CCACCA and rapidly degraded. In Neisseria meningitidis serogroup A / serotype 4A (strain DSM 15465 / Z2491), this protein is Multifunctional CCA protein.